Reading from the N-terminus, the 266-residue chain is Short-chain dehydrogenase/reductase AacuF (266 aa).

NADP(+)-binding residues include leucine 13, aspartate 57, and asparagine 85. Catalysis depends on proton donor residues serine 145 and tyrosine 164. NADP(+) contacts are provided by tyrosine 164, lysine 168, and valine 198. The active-site Lowers pKa of active site Tyr is lysine 168.

Belongs to the short-chain dehydrogenases/reductases (SDR) family.

The protein operates within secondary metabolite biosynthesis. Its function is as follows. Short-chain dehydrogenase/reductase; part of the gene cluster that mediates the biosynthesis of the tetrahydroxanthone dimer secalonic acid D. The pathway begins with the synthesis of atrochrysone thioester by the polyketide synthase AacuL. The atrochrysone carboxyl ACP thioesterase AacuM then breaks the thioester bond and releases the atrochrysone carboxylic acid from AacuL. Atrochrysone carboxylic acid is decarboxylated by the decarboxylase AacuI, and oxidized by the anthrone oxygenase AacuG to yield emodin. Emodin is then reduced to emodin hydroquinone by a yet unidentified oxidoreductase. A-ring reduction by the short chain dehydrogenase AacuN, dehydration by the scytalone dehydratase-like protein AacuK and probable spontaneous re-oxidation, results in overall deoxygenation to chrysophanol. Baeyer-Villiger oxidation by the Baeyer-Villiger monooxygenase (BVMO) AacuH then yields monodictyphenone. Monodictyphenone is transformed into compounds with the tetrahydroxanthone skeleton via methylesterification by the methyltransferase AacuQ, followed by the action of the flavin-dependent monooxygenase AacuC, the isomerase AacuP, and the short chain dehydrogenase/reductase AacuF or AacuD. AacuF and AacuD should accept the same compound as a substrate but perform the ketoreduction with a different stereoselectivity, thus yielding blennolides B and A, respectively. In the final step of the biosynthesis, the cytochrome P450 monooxygenase AacuE accepts blennolide B and/or blennolide A to conduct the dimerization reaction to furnish the tetrahydroxanthone dimers, secalonic acids D, B, and F. The sequence is that of Short-chain dehydrogenase/reductase AacuF from Aspergillus aculeatus (strain ATCC 16872 / CBS 172.66 / WB 5094).